Consider the following 309-residue polypeptide: uncharacterized protein (309 aa).

An S4 RNA-binding domain is found at 11 to 87 (QRLDTFLATL…FPLDILYEDE (77 aa)). Aspartate 131 is an active-site residue.

The protein belongs to the pseudouridine synthase RluA family.

The enzyme catalyses a uridine in RNA = a pseudouridine in RNA. This is an uncharacterized protein from Mycoplasma pneumoniae (strain ATCC 29342 / M129 / Subtype 1) (Mycoplasmoides pneumoniae).